A 1216-amino-acid chain; its full sequence is Histone-lysine N-methyltransferase SETDB1-B (1216 aa).

A coiled-coil region spans residues 38-61; sequence KADLEQLQEWVEQREKEVADIDAL. Tudor domains are found at residues 266–329 and 356–412; these read RLFV…LKKT and LLKP…NLKM. The disordered stretch occupies residues 417-513; that stretch reads SQEKKMAGQQ…QGMPSDLQPK (97 aa). Residues 467–478 show a composition bias toward pro residues; the sequence is PVAPQPAGPPQP. Positions 482-498 are enriched in polar residues; the sequence is ESPSFKSQMAKKSTGQL. Positions 595–666 constitute an MBD domain; the sequence is HRGRNPLLTP…EMFCLDPYVL (72 aa). The Pre-SET domain maps to 728 to 801; that stretch reads VGCDCTDGCR…MCTNRLVQHG (74 aa). Zn(2+)-binding residues include Cys-730, Cys-732, Cys-736, Cys-742, Cys-744, Cys-782, Cys-786, Cys-788, and Cys-793. The 376-residue stretch at 804–1179 folds into the SET domain; the sequence is VRLQLFKTQN…AGTELTWDYN (376 aa). Residues 814–816, Asp-852, and Tyr-854 contribute to the S-adenosyl-L-methionine site; that span reads KGW. 3 disordered regions span residues 892–944, 961–1057, and 1081–1108; these read LPAS…DTFV, RRQA…KTQA, and KSGGGGAGGGGSGPSHGHGGGGGDNGPK. Positions 918-940 are enriched in acidic residues; sequence DSSEESDDEKDDDSNEDDSDSSD. 2 stretches are compositionally biased toward basic and acidic residues: residues 966–976 and 983–997; these read GLKEESQDSKD and GEDRKPPHMPEETGK. Residues 1003 to 1016 show a composition bias toward polar residues; the sequence is WLTNQSSTSANQSV. Composition is skewed to basic and acidic residues over residues 1020–1029 and 1046–1055; these read GGIKTEKKDV and DDNKEREKKT. The segment covering 1082-1105 has biased composition (gly residues); it reads SGGGGAGGGGSGPSHGHGGGGGDN. Residues Arg-1133 and 1136–1137 contribute to the S-adenosyl-L-methionine site; that span reads NH. 4 residues coordinate Zn(2+): Cys-1139, Cys-1192, Cys-1194, and Cys-1199. A Post-SET domain is found at 1188–1204; that stretch reads KELLCCCGSTECRGRLL.

The protein belongs to the class V-like SAM-binding methyltransferase superfamily. Histone-lysine methyltransferase family. Suvar3-9 subfamily.

Its subcellular location is the nucleus. The protein resides in the chromosome. It carries out the reaction L-lysyl(4)-[histone H3] + 3 S-adenosyl-L-methionine = N(6),N(6),N(6)-trimethyl-L-lysyl(4)-[histone H3] + 3 S-adenosyl-L-homocysteine + 3 H(+). Functionally, histone methyltransferase that specifically trimethylates 'Lys-9' of histone H3. H3 'Lys-9' trimethylation represents a specific tag for epigenetic transcriptional repression by recruiting HP1 (CBX1, CBX3 and/or CBX5) proteins to methylated histones. Mainly functions in euchromatin regions, thereby playing a central role in the silencing of euchromatic genes. H3 'Lys-9' trimethylation is coordinated with DNA methylation. Plays a role in promoter hypermethylation and transcriptional silencing of tumor suppressor genes (TSGs) or other tumor-related genes. Also required to maintain a transcriptionally repressive state of genes in undifferentiated embryonic stem cells (ESCs). Associates at promoter regions of tumor suppressor genes (TSGs) leading to their gene silencing. This chain is Histone-lysine N-methyltransferase SETDB1-B (setdb1b), found in Danio rerio (Zebrafish).